Consider the following 76-residue polypeptide: ATP synthase subunit 9, mitochondrial (76 aa).

A run of 2 helical transmembrane segments spans residues 13–35 (GIST…ALIQ) and 50–72 (FAIL…SFLL).

This sequence belongs to the ATPase C chain family. As to quaternary structure, F-type ATPases have 2 components, CF(1) - the catalytic core - and CF(0) - the membrane proton channel. In yeast, the dimeric form of ATP synthase consists of 18 polypeptides: alpha, beta, gamma, delta, epsilon, 4 (B), 5 (OSCP), 6 (A), 8, 9 (C), d, E (Tim11), f, g, h, i, j and k.

The protein localises to the mitochondrion membrane. Functionally, mitochondrial membrane ATP synthase (F(1)F(0) ATP synthase or Complex V) produces ATP from ADP in the presence of a proton gradient across the membrane which is generated by electron transport complexes of the respiratory chain. F-type ATPases consist of two structural domains, F(1) - containing the extramembraneous catalytic core and F(0) - containing the membrane proton channel, linked together by a central stalk and a peripheral stalk. During catalysis, ATP synthesis in the catalytic domain of F(1) is coupled via a rotary mechanism of the central stalk subunits to proton translocation. Part of the complex F(0) domain. A homomeric c-ring of probably 10 subunits is part of the complex rotary element. The sequence is that of ATP synthase subunit 9, mitochondrial (ATP9) from Eremothecium gossypii (strain ATCC 10895 / CBS 109.51 / FGSC 9923 / NRRL Y-1056) (Yeast).